The primary structure comprises 725 residues: A-type inclusion protein A25 (725 aa).

2 coiled-coil regions span residues 418 to 521 and 547 to 719; these read GNSG…RNGK and EIDK…NAET. 4 consecutive repeat copies span residues 609 to 635, 636 to 663, 664 to 687, and 699 to 725. Positions 609–718 are 4 X approximate tandem repeats; the sequence is VRRELEEERR…CRRNNETNAE (110 aa).

It belongs to the poxviridae A25 protein family. In terms of assembly, interacts (via N-terminus) with protein A26.

The protein resides in the virion. Structural protein that forms a matrix surrounding the mature virion (MV) through interaction with protein A26. Presence of protein A25 in the virion structurally prevents direct virus-cell fusion mechanism. This is A-type inclusion protein A25 from Vaccinia virus (strain Western Reserve) (VACV).